Consider the following 443-residue polypeptide: tRNA-2-methylthio-N(6)-dimethylallyladenosine synthase (443 aa).

Positions 3–120 (SKLYIKTFGC…LPELIDARRR (118 aa)) constitute an MTTase N-terminal domain. The [4Fe-4S] cluster site is built by Cys-12, Cys-49, Cys-83, Cys-157, Cys-161, and Cys-164. In terms of domain architecture, Radical SAM core spans 143-377 (RTTGATAFVS…KIQRNAQMIS (235 aa)). Residues 378-441 (QSMVDTIQRV…SHTLRGEISD (64 aa)) enclose the TRAM domain.

The protein belongs to the methylthiotransferase family. MiaB subfamily. Monomer. It depends on [4Fe-4S] cluster as a cofactor.

It localises to the cytoplasm. The catalysed reaction is N(6)-dimethylallyladenosine(37) in tRNA + (sulfur carrier)-SH + AH2 + 2 S-adenosyl-L-methionine = 2-methylsulfanyl-N(6)-dimethylallyladenosine(37) in tRNA + (sulfur carrier)-H + 5'-deoxyadenosine + L-methionine + A + S-adenosyl-L-homocysteine + 2 H(+). Its function is as follows. Catalyzes the methylthiolation of N6-(dimethylallyl)adenosine (i(6)A), leading to the formation of 2-methylthio-N6-(dimethylallyl)adenosine (ms(2)i(6)A) at position 37 in tRNAs that read codons beginning with uridine. In Nitrosomonas eutropha (strain DSM 101675 / C91 / Nm57), this protein is tRNA-2-methylthio-N(6)-dimethylallyladenosine synthase.